The primary structure comprises 603 residues: Thread biopolymer filament subunit gamma (603 aa).

A head region spans residues 1–191; the sequence is MASHSSVSYR…ENETMEEELK (191 aa). An IF rod domain is found at 158-476; sequence VKNILGTLNQ…KLLEGQELMV (319 aa). The coil 1A stretch occupies residues 193–227; the sequence is LTGGVPMSPDSTVNLENVETQVTEMLTEVSNLTLE. The interval 228-240 is linker 1; that stretch reads RVRLEIDVDHLRA. Residues 241-341 form a coil 1B region; the sequence is TADEIKSKYE…DALNVMREEY (101 aa). The interval 342-362 is linker 12; it reads QQVVTKNVQEAETYCKMQIDQ. The segment at 363-381 is coil 2A; the sequence is IQGISTQTTEQISILDKEI. Residues 382–389 form a linker 2 region; it reads NTLEKELQ. The interval 390–510 is coil 2B; sequence PLNVEYQRLL…SSVGYGASST (121 aa). The segment at 511-603 is tail; sequence TLGAISGGYS…GHDSTIILQQ (93 aa). The span at 562–587 shows a compositional bias: low complexity; it reads SSSGGHSMYSSSSMKRSSSKSASASA. The disordered stretch occupies residues 562–603; sequence SSSGGHSMYSSSSMKRSSSKSASASAGGYGTSGHDSTIILQQ.

The protein belongs to the intermediate filament family. As to quaternary structure, coiled-coil heterodimer of an alpha and a gamma subunit. Assemble into 10 nm filaments. Forms a massive, conical, intermediate filament biopolymer of approximately 60 cm.

It localises to the secreted. The protein localises to the extracellular space. Released extracellularly into seawater and provides physical and biological defense against invasive organism by modulation of the viscoelastic properties of mucus. The polypeptide is Thread biopolymer filament subunit gamma (Eptatretus stoutii (Pacific hagfish)).